The chain runs to 229 residues: Heptaprenylglyceryl phosphate synthase (229 aa).

Residue Lys12 coordinates sn-glycerol 1-phosphate. Asp14 and Ser40 together coordinate Mg(2+). Residues 159-164 (YLEYSG), Gly189, and 209-210 (GN) each bind sn-glycerol 1-phosphate.

This sequence belongs to the GGGP/HepGP synthase family. Group I subfamily. As to quaternary structure, homodimer. It depends on Mg(2+) as a cofactor.

It catalyses the reaction sn-glycerol 1-phosphate + all-trans-heptaprenyl diphosphate = 3-heptaprenyl-sn-glycero-1-phosphate + diphosphate. It functions in the pathway membrane lipid metabolism; glycerophospholipid metabolism. Its function is as follows. Prenyltransferase that catalyzes in vivo the transfer of the heptaprenyl moiety of heptaprenyl pyrophosphate (HepPP; 35 carbon atoms) to the C3 hydroxyl of sn-glycerol-1-phosphate (G1P), producing heptaprenylglyceryl phosphate (HepGP). This reaction is an ether-bond-formation step in the biosynthesis of archaea-type G1P-based membrane lipids found in Bacillales. The sequence is that of Heptaprenylglyceryl phosphate synthase from Bacillus cereus (strain B4264).